Consider the following 59-residue polypeptide: MDHRLLEIVACPVCKGKLTYDKDNQELICKLDRLAYPIKEGIPVLLEPEARTMSMDEGR.

This sequence belongs to the UPF0434 family.

The sequence is that of UPF0434 protein VIBHAR_01537 from Vibrio campbellii (strain ATCC BAA-1116).